Consider the following 329-residue polypeptide: MPRGSALSDTERAQLDVMKLLNVSLHEMSRKISRSRHCIREYLKDPVSYGTSKRAPRRKALSVRDERNVIRAASNSCKTARDIRNELQLSASKRTILNVIKRSGVIVRQKLRPAPLLSADHKLKRLEFAKNNMGTNWSKVVFSDEKKFNLDGPDGCRYYWRDLRKEPMVFSRRNFGGGTVMVWGAFTEKKKLEIQFVSSKMNSTDYQNVLELELSKYLRHYSRKDFRFQQDNATIHVSNSTRDYFKLKKINLLDWPARSPDLNPIENLWGILVRIVYAQNKTYPTVASLKQGILDAWKSIPDNQLKSLVRSMEDRLIEIIRTQGNPINY.

Residues 2–135 (PRGSALSDTE…LEFAKNNMGT (134 aa)) mediate DNA binding.

Belongs to the transposase 5 family. In terms of assembly, homodimer or homotetramer.

The protein resides in the nucleus. Binds specifically to the terminal nucleotides of the TC3 inverted repeat. Its expression results in frequent excision and transposition of endogenous TC3 elements. TC3 transposase acts by making double strand breaks at the ends of TC3 element. The excised element would then be inserted into a target sequence. This is Transposable element Tc3 transposase (tc3a) from Caenorhabditis elegans.